A 66-amino-acid polypeptide reads, in one-letter code: Pteroicidin-alpha (66 aa).

The signal sequence occupies residues 1–22 (MKCIALFLVLSMVVLMAEPGEA). Residue arginine 43 is modified to Arginine amide; partial. Positions 44–66 (GKNRDMAEQQELERAFDRERAFA) are excised as a propeptide.

Belongs to the pleurocidin family. Post-translationally, this peptide exists in N-terminally amidated and non-amidated forms. The amidated form is more active and has a greater alpha-helix content than the non-amidated form. As to expression, expressed in gill, skin, intestine, spleen, anterior kidney, and blood cells.

The protein localises to the secreted. Functionally, the amidated peptide is bactericidal on human pathogens like S.aureus or E.coli, as well as on the fish pathogen A.salmonicida. May also be active against a variety of fungi. It can kill bacteria in less than 30 minutes (S.aureus) and 120 minutes (V.vulnificus). It induces hemolysis of erythrocytes from human and fishes (sea bass and lesser-spotted dogfish). Its function is as follows. The non-amidated peptide only inhibits growth of human pathogens like S.aureus or E.coli, and the fish pathogen A.salmonicida. Induces hemolysis of erythrocytes from human and fishes (sea bass and lesser-spotted dogfish). The sequence is that of Pteroicidin-alpha from Pterois volitans (Red lionfish).